We begin with the raw amino-acid sequence, 119 residues long: Small ribosomal subunit protein uS10 (119 aa).

N-acetylalanine is present on alanine 2. Lysine 4 is covalently cross-linked (Glycyl lysine isopeptide (Lys-Gly) (interchain with G-Cter in ubiquitin)). An N6-succinyllysine; alternate modification is found at lysine 8. A Glycyl lysine isopeptide (Lys-Gly) (interchain with G-Cter in ubiquitin); alternate cross-link involves residue lysine 8. Phosphothreonine is present on threonine 9. 2 positions are modified to N6-acetyllysine: lysine 34 and lysine 75. A Phosphoserine modification is found at serine 93.

This sequence belongs to the universal ribosomal protein uS10 family. Component of the 40S small ribosomal subunit. Polyubiquitinated by ZNF598 via 'Lys-63'-linked ubiquitin chains when a ribosome has stalled, initiating the ribosome quality control (RQC) pathway to degrade the potentially detrimental aberrant nascent polypeptide. Deubiquitinated by OTUD3 and USP21, antagonizing ZNF598 activity. Post-translationally, ufmylated by UFL1.

It is found in the cytoplasm. Functionally, component of the small ribosomal subunit. The ribosome is a large ribonucleoprotein complex responsible for the synthesis of proteins in the cell. This chain is Small ribosomal subunit protein uS10 (RPS20), found in Sus scrofa (Pig).